The sequence spans 178 residues: Cytidylate kinase (178 aa).

7–15 (GLPGTGTTT) serves as a coordination point for ATP.

This sequence belongs to the cytidylate kinase family. Type 2 subfamily.

It is found in the cytoplasm. The enzyme catalyses CMP + ATP = CDP + ADP. The catalysed reaction is dCMP + ATP = dCDP + ADP. The chain is Cytidylate kinase (cmk) from Methanocaldococcus jannaschii (strain ATCC 43067 / DSM 2661 / JAL-1 / JCM 10045 / NBRC 100440) (Methanococcus jannaschii).